Here is a 398-residue protein sequence, read N- to C-terminus: Streptopain (398 aa).

Positions 1–27 are cleaved as a signal peptide; that stretch reads MNKKKLGIRLLSLLALGGFVLANPVFA. A propeptide spanning residues 28-145 is cleaved from the precursor; it reads DQNFARNEKE…TTYAGTAEIK (118 aa). Cysteine 192 serves as the catalytic Nucleophile. Cysteine 192 bears the Cysteine methyl disulfide; in zymogen form mark. Residues serine 282 and glycine 339 each coordinate a protein. Catalysis depends on histidine 340, which acts as the Proton acceptor. Residues 368–390 are C-terminal active site loop; that stretch reads RLDALNPSALGTGGGAGGFNGYQ.

This sequence belongs to the peptidase C10 family. Monomer. Post-translationally, the mature protease is derived from the precursor sequence by cleavage, either in cis via an autocatalytic mechanism, or in trans by mature SpeB or host proteases (trypsin, plasmin or subtilisin). Maturation can involve a number of protein cleavage intermediates. Mature SpeB probably plays the most important role in protein maturation in physiological conditions. Methylthiolation at Cys-192 of the inactive zymogen form is probably involved in the mechanism of secretion of the proteinase into the culture fluid.

It is found in the secreted. It localises to the host extracellular space. The protein localises to the host cytoplasm. It catalyses the reaction Preferential cleavage with hydrophobic residues at P2, P1 and P1'.. Synthesized as an inactive zymogen to protect the intracellular components of the bacteria from proteolytic activity during protein production. Once secreted into the extracellular milieu, cleaved into the active protease: maturation can be mediated in cis by autocatalytic cleavage, or in trans by mature SpeB or host proteases. Protease activity is strongly inhibited by zinc and copper, which prevent its maturation into an active protease: inhibition by metal ions may be required to prevent proteolysis of streptococcal proteins. Its function is as follows. Cysteine protease that acts as a key streptococcal virulence factor by cleaving host proteins involved in immune response. Triggers inflammation by mediating cleavage of host proteins, which can both promote host pathogenesis by triggering sterile inflammation and/or restrict streptococcal infection, depending on host immune statue and infection site. Cleaves host gasdermin-A (GSDMA) in epithelial cells, promoting GSDMA activation and formation of gasdermin pores, triggering pyroptosis. Pyroptosis triggers the elimination of the infected skin cell, depriving the pathogen of its protective niche, while inducing an inflammatory response. This ultimately prevents bacterial penetration of the epithelial barrier and a subsequent systemic dissemination of the pathogen. Also mediates cleavage of the cytokine precursor interleukin-1 beta (IL1B) to its mature form, resulting in inflammation and septic shock. SpeB-mediated maturation of IL1B plays a dual role depending on infection site: while IL1B inflammatory response prevents bacterial growth during invasive skin infections, it promotes streptococcal infection of the nasopharynx by disrupting colonization resistance mediated by the microbiota. Inhibits host autophagy be catalyzing cleavage and inactivation of key autophagy factors, such as CALCOCO2, NBR1 and SQSTM1. Cleaves and inhibits a number of complement factors, such as C2, C3-beta chain of C3, C4, C5 or SERPING1, thereby promoting evasion of host immunity. May also impair adaptive immunity by catalyzing cleavage and degradation of host immunoglobulins to promote immune system evasion; the relevance of this activity is however unsure in vivo. Catalyzes maturation and release of the peptide hormone bradykinin from the precursor Kininogen-1 (KNG1) to produce hypotension during septic shock. Also involved in bacterial translocation across the host epithelial barrier by mediating cleavage and degradation of host epithelial junction proteins, such as CDH1 and OCLN. Additionally, has been involved in degradation of fibronectin and vitronectin, two host extracellular matrix proteins involved in tissue integrity. Also able to catalyze cleavage and degradation of streptococcal proteins, such as C5a peptidase, EndoS or SmeZ. Degradation of streptococcal proteins is however strictly regulated to preserve integrity of other virulence factors. The polypeptide is Streptopain (speB) (Streptococcus pyogenes serotype M3 (strain ATCC BAA-595 / MGAS315)).